Here is a 507-residue protein sequence, read N- to C-terminus: Histidine ammonia-lyase (507 aa).

A cross-link (5-imidazolinone (Ala-Gly)) is located at residues 141 to 143; it reads ASG. Position 142 is a 2,3-didehydroalanine (Ser) (Ser142).

Belongs to the PAL/histidase family. Contains an active site 4-methylidene-imidazol-5-one (MIO), which is formed autocatalytically by cyclization and dehydration of residues Ala-Ser-Gly.

Its subcellular location is the cytoplasm. The enzyme catalyses L-histidine = trans-urocanate + NH4(+). Its pathway is amino-acid degradation; L-histidine degradation into L-glutamate; N-formimidoyl-L-glutamate from L-histidine: step 1/3. The chain is Histidine ammonia-lyase from Burkholderia ambifaria (strain ATCC BAA-244 / DSM 16087 / CCUG 44356 / LMG 19182 / AMMD) (Burkholderia cepacia (strain AMMD)).